Reading from the N-terminus, the 156-residue chain is Endogenous retrovirus group K member 21 Pro protein (156 aa).

Residues 21-96 (FEGLVDTGAD…IPLNLWGRDL (76 aa)) form the Peptidase A2 domain. Aspartate 26 is an active-site residue. In terms of domain architecture, G-patch spans 111–156 (YSPTSQKIMTKMGYIPGKGLGKNEDGIKVPVEAKINQKREGIGYPF).

It belongs to the peptidase A2 family. HERV class-II K(HML-2) subfamily. As to quaternary structure, active as a homodimer. Post-translationally, autoproteolytically processed at the N-terminus. Expected C-terminal autoprocessing not detected. The sequence shown is that of the processed Pro protein.

The catalysed reaction is Processing at the authentic HIV-1 PR recognition site and release of the mature p17 matrix and the p24 capsid protein, as a result of the cleavage of the -SQNY-|-PIVQ- cleavage site.. Functionally, retroviral proteases have roles in the processing of the primary translation products and the maturation of the viral particle. Endogenous Pro proteins may have kept, lost or modified their original function during evolution. This chain is Endogenous retrovirus group K member 21 Pro protein (ERVK-21), found in Homo sapiens (Human).